The chain runs to 244 residues: Small ribosomal subunit protein uS3 (244 aa).

The KH type-2 domain maps to I39–K107. Residues L216 to N244 are disordered. Residues K220–K238 are compositionally biased toward basic residues.

This sequence belongs to the universal ribosomal protein uS3 family. Part of the 30S ribosomal subunit. Forms a tight complex with proteins S10 and S14.

Its function is as follows. Binds the lower part of the 30S subunit head. Binds mRNA in the 70S ribosome, positioning it for translation. The polypeptide is Small ribosomal subunit protein uS3 (Finegoldia magna (strain ATCC 29328 / DSM 20472 / WAL 2508) (Peptostreptococcus magnus)).